Here is a 212-residue protein sequence, read N- to C-terminus: Coat protein (212 aa).

This sequence belongs to the potexvirus capsid protein family.

Its subcellular location is the virion. Required for genome encapsidation. Forms ribonucleoprotein complexes along with TGB1 helicase and viral RNA. The chain is Coat protein from Chenopodium album (Fat hen).